The following is a 619-amino-acid chain: Replication restart protein PriA (619 aa).

The region spanning 119–285 is the Helicase ATP-binding domain; it reads LKELQKHPAS…KDKALVRLKG (167 aa). 132-139 provides a ligand contact to ATP; sequence GDTGSGKT. Positions 228-231 match the DEAH box motif; it reads DEEH. Cys-336, Cys-339, Cys-345, Cys-348, Cys-363, Cys-366, Cys-376, and Cys-379 together coordinate Zn(2+). In terms of domain architecture, Helicase C-terminal spans 371–532; it reads PIPKICNACQ…ELYPPFSRLC (162 aa).

This sequence belongs to the helicase family. PriA subfamily. As to quaternary structure, component of the replication restart primosome. It depends on Zn(2+) as a cofactor.

It carries out the reaction Couples ATP hydrolysis with the unwinding of duplex DNA by translocating in the 3'-5' direction.. The enzyme catalyses ATP + H2O = ADP + phosphate + H(+). Initiates the restart of stalled replication forks, which reloads the replicative helicase on sites other than the origin of replication. Recognizes and binds to abandoned replication forks and remodels them to uncover a helicase loading site. Promotes assembly of the primosome at these replication forks. This Helicobacter pylori (strain J99 / ATCC 700824) (Campylobacter pylori J99) protein is Replication restart protein PriA.